Reading from the N-terminus, the 129-residue chain is ATP synthase epsilon chain (129 aa).

The protein belongs to the ATPase epsilon chain family. As to quaternary structure, F-type ATPases have 2 components, CF(1) - the catalytic core - and CF(0) - the membrane proton channel. CF(1) has five subunits: alpha(3), beta(3), gamma(1), delta(1), epsilon(1). CF(0) has three main subunits: a, b and c.

It is found in the cell inner membrane. Functionally, produces ATP from ADP in the presence of a proton gradient across the membrane. In Campylobacter jejuni subsp. jejuni serotype O:2 (strain ATCC 700819 / NCTC 11168), this protein is ATP synthase epsilon chain.